The following is a 631-amino-acid chain: Probable potassium transport system protein Kup 1 (631 aa).

The next 12 helical transmembrane spans lie at 17–37 (LALGALGVVFGDIGTSPLYAL), 55–75 (LSLIFWSLIIVVSFKYLMIIF), 101–121 (PLFYIVAIFGAGLLLGDGMLT), 140–160 (LYPYVLPIASVILVLLFSLQA), 166–186 (IGYLFGPLILIWFITIAILGI), 217–237 (FLLGGIFLVVTGGEALFADIG), 249–269 (FFIALPCLLLNYFGQGANLIV), 277–297 (PFFMIAPPWFYLPLIIIATVA), 338–358 (IYVPQINFILFIGTMAFCLAF), 370–390 (IAVNLEMLLVDAMVAYAAVSI), 395–415 (TFNVIFLFGLFLLIDLAFLGA), and 420–440 (FITGGWVPIVLAFVIAFIMYS).

This sequence belongs to the HAK/KUP transporter (TC 2.A.72) family.

It localises to the cell inner membrane. It carries out the reaction K(+)(in) + H(+)(in) = K(+)(out) + H(+)(out). Transport of potassium into the cell. Likely operates as a K(+):H(+) symporter. In Legionella pneumophila (strain Corby), this protein is Probable potassium transport system protein Kup 1.